A 259-amino-acid chain; its full sequence is Phosphatidylserine decarboxylase proenzyme (259 aa).

The active-site Schiff-base intermediate with substrate; via pyruvic acid is S183. At S183 the chain carries Pyruvic acid (Ser); by autocatalysis.

Belongs to the phosphatidylserine decarboxylase family. PSD-A subfamily. Heterodimer of a large membrane-associated beta subunit and a small pyruvoyl-containing alpha subunit. Requires pyruvate as cofactor. Post-translationally, is synthesized initially as an inactive proenzyme. Formation of the active enzyme involves a self-maturation process in which the active site pyruvoyl group is generated from an internal serine residue via an autocatalytic post-translational modification. Two non-identical subunits are generated from the proenzyme in this reaction, and the pyruvate is formed at the N-terminus of the alpha chain, which is derived from the carboxyl end of the proenzyme. The post-translation cleavage follows an unusual pathway, termed non-hydrolytic serinolysis, in which the side chain hydroxyl group of the serine supplies its oxygen atom to form the C-terminus of the beta chain, while the remainder of the serine residue undergoes an oxidative deamination to produce ammonia and the pyruvoyl prosthetic group on the alpha chain.

It is found in the cell membrane. The enzyme catalyses a 1,2-diacyl-sn-glycero-3-phospho-L-serine + H(+) = a 1,2-diacyl-sn-glycero-3-phosphoethanolamine + CO2. Its pathway is phospholipid metabolism; phosphatidylethanolamine biosynthesis; phosphatidylethanolamine from CDP-diacylglycerol: step 2/2. Catalyzes the formation of phosphatidylethanolamine (PtdEtn) from phosphatidylserine (PtdSer). This is Phosphatidylserine decarboxylase proenzyme from Neisseria gonorrhoeae (strain NCCP11945).